The sequence spans 1409 residues: MKALLDLFKQVTQEEEFDAIKIALASPEKIRSWSYGEVKKPETINYRTFKPERDGLFCAKIFGPIKDYECLCGKYKRLKHRGVICEKCGVEVTLSKVRRERMAHIELASPVAHIWFLKSLPSRLGMVLDIALRDIERVLYFEAYIVIDPGMTPLTRGQLLTEDDYLSKVEEYGDEFNAVMGAEAVRELLRTMDIHTEIEKLRRELGETGSEAKIKKIAKRLKVLEAFQKSGIKPEWMILEVLPVLPPELRPLVPLDGGRFATSDLNDLYRRVINRNNRLKRLLELKAPEIIVRNEKRMLQEAVDSLLDNGRRGKVMTGANKRPLKSLADMIKGKGGRFRQNLLGKRVDYSGRSVIVVGPQLKLHQCGLPKKMALELFKPFIFHKLEVLGLATTIKAAKKKVEEEGPEVWDILEDVIREHPVLLNRAPTLHRLGIQAFEPTLVEGKAIQLHPLVCAAFNADFDGDQMAVHVPLSLEAQMEARTLMLASNNVLSPANGEPIIVPSQDIVLGLYYMTREKKAARGEGMRFANVAEVQRAYDSGQVDLHARITVRLREFDVEVDGQKREKITRYETTVGRALLSEILPAGLPFSVIDKALKKKEISRLINASFRRVGIRETVIFADKLMYTGYTYATKAGISISINDMLVPPEKEQLIASAEAEVKEIEDQYVSGLVTQGERYNKVVDIWGRAGDKVADAMMKQLREEVVLDANGEVAKDAEGNPIKQESFNAIYMMADSGARGSAAQVRQLAGMRGLMAKPDGSIIETPITANFRDGLNVLQYFISTHGARKGLADTALKTANSGYLTRRLVDVTQDLVVTEHDCGTTEGLYTKALVKGGEVVEPLHDRILGRVAALDVLNPETQEVVYPAGTLLTEDEVEHIDALGIDEVKVRTALTCETRYGICAKCYGRDLGRGKLINMGEAVGVIAAQSIGEPGTQLTMRTFHIGGAVSRAASVSQVESKSNGIVHFTSTMRYVTNARGEQVVISRNGEAIIQDENGRERERHKVPYGATLQITDGKPVKAGQALATWDPHTRPIITEYAGRVKFENVEEGVTVAKQVDEVTGLSSLVVIDPKQRAGQSKGLRPQVKLLDANGVEVKVAGGEAPVSVTFQLGCIITVKDGQEVGVGEVLARIPQESSKTRDITGGLPRVAELFEARSPKDAGLLAEVTGTISFGKDTKGKQRLVITDLDGVSHEFLIPKDKHVTAHDGQVVTKGESIVDGPADPQDILRLQGREALARYIIDEVQDVYRLQGVKINDKHIEVIVRQMLRRVRITDAGDTSFILGEQVERADVLTENERVLAQDGRPASFEYVLLGITKASLSTDSFISAASFQETTRVLTEAAILGKRDELRGLKENVIVGRLIPAGTGLAYHETRKRNVAGVDSAPAIIEDAGNVQLEETSGNPEVA.

C70, C72, C85, and C88 together coordinate Zn(2+). Residues D460, D462, and D464 each contribute to the Mg(2+) site. Zn(2+) contacts are provided by C822, C896, C903, and C906.

The protein belongs to the RNA polymerase beta' chain family. The RNAP catalytic core consists of 2 alpha, 1 beta, 1 beta' and 1 omega subunit. When a sigma factor is associated with the core the holoenzyme is formed, which can initiate transcription. Mg(2+) serves as cofactor. It depends on Zn(2+) as a cofactor.

It catalyses the reaction RNA(n) + a ribonucleoside 5'-triphosphate = RNA(n+1) + diphosphate. Its function is as follows. DNA-dependent RNA polymerase catalyzes the transcription of DNA into RNA using the four ribonucleoside triphosphates as substrates. This is DNA-directed RNA polymerase subunit beta' from Methylobacillus flagellatus (strain ATCC 51484 / DSM 6875 / VKM B-1610 / KT).